The primary structure comprises 155 residues: 2-C-methyl-D-erythritol 2,4-cyclodiphosphate synthase (155 aa).

The a divalent metal cation site is built by Asp-8 and His-10. 4-CDP-2-C-methyl-D-erythritol 2-phosphate is bound by residues 8–10 (DVH) and 34–35 (HS). An a divalent metal cation-binding site is contributed by His-42. Residues 56 to 58 (DIG), 61 to 65 (FPDKD), 132 to 135 (TTTE), and Arg-142 each bind 4-CDP-2-C-methyl-D-erythritol 2-phosphate.

It belongs to the IspF family. Homotrimer. The cofactor is a divalent metal cation.

The enzyme catalyses 4-CDP-2-C-methyl-D-erythritol 2-phosphate = 2-C-methyl-D-erythritol 2,4-cyclic diphosphate + CMP. It functions in the pathway isoprenoid biosynthesis; isopentenyl diphosphate biosynthesis via DXP pathway; isopentenyl diphosphate from 1-deoxy-D-xylulose 5-phosphate: step 4/6. Involved in the biosynthesis of isopentenyl diphosphate (IPP) and dimethylallyl diphosphate (DMAPP), two major building blocks of isoprenoid compounds. Catalyzes the conversion of 4-diphosphocytidyl-2-C-methyl-D-erythritol 2-phosphate (CDP-ME2P) to 2-C-methyl-D-erythritol 2,4-cyclodiphosphate (ME-CPP) with a corresponding release of cytidine 5-monophosphate (CMP). This is 2-C-methyl-D-erythritol 2,4-cyclodiphosphate synthase from Desulfatibacillum aliphaticivorans.